We begin with the raw amino-acid sequence, 80 residues long: Raniseptin-5 (80 aa).

An N-terminal signal peptide occupies residues 1 to 22 (MAFLKKSLFLVLFLGIVSLSIC). Residues 23 to 49 (EEEKREGEEEEKQEEENEELSEEELRE) constitute a propeptide that is removed on maturation.

The protein belongs to the frog skin active peptide (FSAP) family. Dermaseptin subfamily. In terms of tissue distribution, expressed by the skin glands.

Its subcellular location is the secreted. Functionally, has antibacterial activity. The chain is Raniseptin-5 from Boana raniceps (Chaco tree frog).